A 317-amino-acid polypeptide reads, in one-letter code: Transaldolase 1 (317 aa).

The active-site Schiff-base intermediate with substrate is Lys132.

Belongs to the transaldolase family. Type 1 subfamily. Homodimer.

The protein resides in the cytoplasm. It catalyses the reaction D-sedoheptulose 7-phosphate + D-glyceraldehyde 3-phosphate = D-erythrose 4-phosphate + beta-D-fructose 6-phosphate. The protein operates within carbohydrate degradation; pentose phosphate pathway; D-glyceraldehyde 3-phosphate and beta-D-fructose 6-phosphate from D-ribose 5-phosphate and D-xylulose 5-phosphate (non-oxidative stage): step 2/3. Its function is as follows. Transaldolase is important for the balance of metabolites in the pentose-phosphate pathway. The protein is Transaldolase 1 of Salmonella paratyphi A (strain ATCC 9150 / SARB42).